Here is a 201-residue protein sequence, read N- to C-terminus: Potassium-transporting ATPase KdpC subunit (201 aa).

The helical transmembrane segment at 13 to 33 threads the bilayer; sequence IIFMIFTILCGGIYTIFITGI.

It belongs to the KdpC family. The system is composed of three essential subunits: KdpA, KdpB and KdpC.

The protein resides in the cell membrane. In terms of biological role, part of the high-affinity ATP-driven potassium transport (or Kdp) system, which catalyzes the hydrolysis of ATP coupled with the electrogenic transport of potassium into the cytoplasm. This subunit acts as a catalytic chaperone that increases the ATP-binding affinity of the ATP-hydrolyzing subunit KdpB by the formation of a transient KdpB/KdpC/ATP ternary complex. The sequence is that of Potassium-transporting ATPase KdpC subunit from Clostridium botulinum (strain Eklund 17B / Type B).